The primary structure comprises 304 residues: Mas-related G-protein coupled receptor member A (304 aa).

Topologically, residues 1–17 (MDKTIPGSFNSRTLIPN) are extracellular. Residues 18 to 38 (LLIIISGLVGLIGNAMVFWLL) traverse the membrane as a helical segment. At 39-46 (GFRLARNA) the chain is on the cytoplasmic side. A helical transmembrane segment spans residues 47–67 (FSVYILNLALADFLFLLCHII). At 68–80 (DSTLLLLKFSYPN) the chain is on the extracellular side. Residues 81–101 (IIFLPCFNTVMMVPYIAGLSM) traverse the membrane as a helical segment. Over 102–132 (LSAISTERCLSVVCPIWYRCRRPKHTSTVMC) the chain is Cytoplasmic. Residues 133-153 (SAIWVLSLLICILNRYFCGFL) traverse the membrane as a helical segment. Topologically, residues 154-167 (DTKYEKDNRCLASN) are extracellular. The chain crosses the membrane as a helical span at residues 168 to 188 (FFTAACLIFLFVVLCLSSLAL). The Cytoplasmic portion of the chain corresponds to 189 to 211 (LVRLFCGAGRMKLTRLYATIMLT). A helical membrane pass occupies residues 212–232 (VLVFLLCGLPFGIHWFLLIWI). The Extracellular segment spans residues 233-244 (KIDYGKFAYGLY). A helical membrane pass occupies residues 245–265 (LAALVLTAVNSCANPIIYFFV). Residues 266–304 (GSFRHQKHQTLKMVLQRALQDTPETAENTVEMSSSKVEP) lie on the Cytoplasmic side of the membrane.

This sequence belongs to the G-protein coupled receptor 1 family. Mas subfamily. In terms of tissue distribution, expressed in a subset of IB4-positive small diameter nociceptive dorsal root neurons.

The protein resides in the cell membrane. Its function is as follows. Orphan receptor activated by a subset of RFamide-family neuropeptides such as FLRF-amide and FMRF-amide. Mediates its action by association with G proteins that activate a phosphatidylinositol-calcium second messenger system. Its effect is mediated by G(q) and G(11) proteins. May regulate the function of nociceptive neurons by modulation of pain perception. This is Mas-related G-protein coupled receptor member A (Mrgpra) from Rattus norvegicus (Rat).